Consider the following 697-residue polypeptide: Methionine--tRNA ligase (697 aa).

The 'HIGH' region motif lies at 12–22; sequence PYANGHFHIGH. Zn(2+) contacts are provided by Cys143, Cys146, Cys156, and Cys159. Residues 342-346 carry the 'KMSKS' region motif; that stretch reads KMSKS. Lys345 is an ATP binding site. The disordered stretch occupies residues 557 to 577; that stretch reads FEPPAEPSPQTSPAAAGAGAV. One can recognise a tRNA-binding domain in the interval 591 to 697; sequence DFTKIDLRLA…PGAVPGLRVR (107 aa).

It belongs to the class-I aminoacyl-tRNA synthetase family. MetG type 1 subfamily. Homodimer. Requires Zn(2+) as cofactor.

The protein localises to the cytoplasm. It carries out the reaction tRNA(Met) + L-methionine + ATP = L-methionyl-tRNA(Met) + AMP + diphosphate. Its function is as follows. Is required not only for elongation of protein synthesis but also for the initiation of all mRNA translation through initiator tRNA(fMet) aminoacylation. The chain is Methionine--tRNA ligase from Methylibium petroleiphilum (strain ATCC BAA-1232 / LMG 22953 / PM1).